The sequence spans 370 residues: DNA replication and repair protein RecF (370 aa).

30–37 (GENAQGKT) is an ATP binding site.

The protein belongs to the RecF family.

The protein localises to the cytoplasm. The RecF protein is involved in DNA metabolism; it is required for DNA replication and normal SOS inducibility. RecF binds preferentially to single-stranded, linear DNA. It also seems to bind ATP. This Staphylococcus aureus (strain bovine RF122 / ET3-1) protein is DNA replication and repair protein RecF.